Reading from the N-terminus, the 322-residue chain is ATP-dependent 6-phosphofructokinase (322 aa).

Residues G12, 73-74 (RF), and 103-106 (GDGT) each bind ATP. Residue D104 participates in Mg(2+) binding. Substrate is bound at residue 126–128 (TID). The active-site Proton acceptor is the D128. R155 provides a ligand contact to ADP. Substrate contacts are provided by residues R163 and 170–172 (MGR). Residues 186-188 (GSE), K212, and 214-216 (KPS) each bind ADP. Residues E223, R245, and 251–254 (HTQR) contribute to the substrate site.

It belongs to the phosphofructokinase type A (PFKA) family. ATP-dependent PFK group I subfamily. Prokaryotic clade 'B1' sub-subfamily. As to quaternary structure, homotetramer. Mg(2+) serves as cofactor.

The protein resides in the cytoplasm. It carries out the reaction beta-D-fructose 6-phosphate + ATP = beta-D-fructose 1,6-bisphosphate + ADP + H(+). Its pathway is carbohydrate degradation; glycolysis; D-glyceraldehyde 3-phosphate and glycerone phosphate from D-glucose: step 3/4. Its activity is regulated as follows. Allosterically activated by ADP and other diphosphonucleosides, and allosterically inhibited by phosphoenolpyruvate. In terms of biological role, catalyzes the phosphorylation of D-fructose 6-phosphate to fructose 1,6-bisphosphate by ATP, the first committing step of glycolysis. This Mesomycoplasma hyopneumoniae (strain J / ATCC 25934 / NCTC 10110) (Mycoplasma hyopneumoniae) protein is ATP-dependent 6-phosphofructokinase.